The sequence spans 245 residues: Glycerophosphodiester phosphodiesterase (245 aa).

Residues 2–241 enclose the GP-PDE domain; it reads TKIFAHRGFK…DFPDRAVKIR (240 aa). H7 serves as the catalytic Proton acceptor. A divalent metal cation contacts are provided by E34 and D36. H49 functions as the Proton donor in the catalytic mechanism. E110 is an a divalent metal cation binding site.

It belongs to the glycerophosphoryl diester phosphodiesterase family. Ni(2+) serves as cofactor. The cofactor is Co(2+). It depends on Mn(2+) as a cofactor.

The catalysed reaction is a sn-glycero-3-phosphodiester + H2O = an alcohol + sn-glycerol 3-phosphate + H(+). Inhibited by EDTA and various organic solvents such as chloroform, toluene or benzene. Its function is as follows. Glycerophosphodiester phosphodiesterase hydrolyzes glycerophosphodiesters into glycerol-3-phosphate (G3P) and the corresponding alcohol. Can hydrolyze the model substrate bis-(p-nitrophenyl phosphate) (bis(pNPP)) to p-nitrophenol. Can also catalyze the degradation of diphenyl phosphate (DPHP) to phenyl phosphate (PHP). DPHP is an aryl phosphate ester used as a chemical additive and an industrial catalyst that can easily spread to the environment and exhibits toxicity toward organisms. The protein is Glycerophosphodiester phosphodiesterase of Bacillus altitudinis.